We begin with the raw amino-acid sequence, 481 residues long: Cysteine--tRNA ligase (481 aa).

Residue Cys27 coordinates Zn(2+). The 'HIGH' region signature appears at Pro29–Asn39. Cys222, His247, and Glu251 together coordinate Zn(2+). The 'KMSKS' region signature appears at Lys279–Ser283. An ATP-binding site is contributed by Lys282.

The protein belongs to the class-I aminoacyl-tRNA synthetase family. As to quaternary structure, monomer. It depends on Zn(2+) as a cofactor.

The protein resides in the cytoplasm. It carries out the reaction tRNA(Cys) + L-cysteine + ATP = L-cysteinyl-tRNA(Cys) + AMP + diphosphate. This is Cysteine--tRNA ligase from Borrelia hermsii (strain HS1 / DAH).